We begin with the raw amino-acid sequence, 232 residues long: Anti-sigma-K factor RskA (232 aa).

Topologically, residues 1-90 (MTEHTDFELL…EVRRQSRWRT (90 aa)) are cytoplasmic. Residues 91-111 (AAFASAAAIAVGLGAFGLGVL) traverse the membrane as a helical segment. Over 112–232 (TRPSPPPTVA…GTILAELPLG (121 aa)) the chain is Extracellular.

The protein belongs to the anti-sigma-K factor family.

It localises to the cell membrane. Functionally, an anti-sigma factor for extracytoplasmic function (ECF) sigma factor SigK. ECF sigma factors are held in an inactive form by an anti-sigma factor until released by regulated intramembrane proteolysis (RIP). RIP occurs when an extracytoplasmic signal triggers a concerted proteolytic cascade to transmit information and elicit cellular responses. The membrane-spanning regulatory substrate protein is first cut extracytoplasmically (site-1 protease, S1P), then within the membrane itself (site-2 protease, S2P, Rip1), while cytoplasmic proteases finish degrading the regulatory protein, liberating the sigma factor. The polypeptide is Anti-sigma-K factor RskA (rskA) (Mycobacterium tuberculosis (strain ATCC 25177 / H37Ra)).